Reading from the N-terminus, the 796-residue chain is Quinoprotein glucose dehydrogenase (796 aa).

The Cytoplasmic portion of the chain corresponds to 1 to 10; sequence MAINNTGSRR. Residues 11–37 form a helical membrane-spanning segment; that stretch reads LLVTLTALFAALCGLYLLIGGGWLVAI. The Periplasmic segment spans residues 38-40; the sequence is GGS. A helical transmembrane segment spans residues 41 to 58; that stretch reads WYYPIAGLVMLGVAWMLW. Residues 59 to 62 are Cytoplasmic-facing; that stretch reads RSKR. The helical transmembrane segment at 63–81 threads the bilayer; sequence AALWLYAALLLGTMIWGVW. Residues 82-95 are Periplasmic-facing; that stretch reads EVGFDFWALTPRSD. The chain crosses the membrane as a helical span at residues 96–110; sequence ILVFFGIWLILPFVW. Topologically, residues 111-118 are cytoplasmic; sequence RRLVIPAS. Residues 119 to 141 form a helical membrane-spanning segment; it reads GAVAALVVALLISGGILTWAGFN. The Periplasmic portion of the chain corresponds to 142-796; sequence DPQEINGTLS…VAYALPDDVK (655 aa). Catalysis depends on Asp-466, which acts as the Proton acceptor.

This sequence belongs to the bacterial PQQ dehydrogenase family. As to quaternary structure, monomer. Pyrroloquinoline quinone serves as cofactor.

The protein localises to the cell inner membrane. The catalysed reaction is a ubiquinone + D-glucose = D-glucono-1,5-lactone + a ubiquinol. Its function is as follows. GDH is probably involved in energy conservation rather than in sugar metabolism. The protein is Quinoprotein glucose dehydrogenase (gcd) of Escherichia coli (strain K12).